The following is a 341-amino-acid chain: Pyrophosphate--fructose 6-phosphate 1-phosphotransferase (341 aa).

Glycine 10 contacts diphosphate. A Mg(2+)-binding site is contributed by glutamate 103. Residues 125-127, arginine 162, 169-171, glutamate 221, arginine 265, and 271-274 contribute to the substrate site; these read TID, MGR, and HVQR. Aspartate 127 functions as the Proton acceptor in the catalytic mechanism.

This sequence belongs to the phosphofructokinase type A (PFKA) family. Mixed-substrate PFK group III subfamily. As to quaternary structure, homodimer or homotetramer. The cofactor is Mg(2+).

The protein resides in the cytoplasm. It catalyses the reaction beta-D-fructose 6-phosphate + diphosphate = beta-D-fructose 1,6-bisphosphate + phosphate + H(+). It functions in the pathway carbohydrate degradation; glycolysis; D-glyceraldehyde 3-phosphate and glycerone phosphate from D-glucose: step 3/4. With respect to regulation, non-allosteric. Functionally, catalyzes the phosphorylation of D-fructose 6-phosphate, the first committing step of glycolysis. Uses inorganic phosphate (PPi) as phosphoryl donor instead of ATP like common ATP-dependent phosphofructokinases (ATP-PFKs), which renders the reaction reversible, and can thus function both in glycolysis and gluconeogenesis. Consistently, PPi-PFK can replace the enzymes of both the forward (ATP-PFK) and reverse (fructose-bisphosphatase (FBPase)) reactions. This Amycolatopsis mediterranei (strain S699) (Nocardia mediterranei) protein is Pyrophosphate--fructose 6-phosphate 1-phosphotransferase.